A 419-amino-acid chain; its full sequence is DNA primase DnaG (419 aa).

One can recognise a Toprim domain in the interval 174 to 260 (DAIIVVEGRS…EVEDLEKDEV (87 aa)). Glu-180, Asp-222, and Asp-224 together coordinate Mg(2+). The interval 277–314 (HNILSESDSKNSHKKHNGKHNNKHSNNKHQQHETKVKE) is disordered. Positions 288–305 (SHKKHNGKHNNKHSNNKH) are enriched in basic residues.

This sequence belongs to the archaeal DnaG primase family. In terms of assembly, forms a ternary complex with MCM helicase and DNA. Component of the archaeal exosome complex. It depends on Mg(2+) as a cofactor.

The enzyme catalyses ssDNA + n NTP = ssDNA/pppN(pN)n-1 hybrid + (n-1) diphosphate.. Its function is as follows. RNA polymerase that catalyzes the synthesis of short RNA molecules used as primers for DNA polymerase during DNA replication. Also part of the exosome, which is a complex involved in RNA degradation. Acts as a poly(A)-binding protein that enhances the interaction between heteromeric, adenine-rich transcripts and the exosome. The polypeptide is DNA primase DnaG (Methanobrevibacter smithii (strain ATCC 35061 / DSM 861 / OCM 144 / PS)).